The following is a 383-amino-acid chain: 8-amino-7-oxononanoate synthase (383 aa).

R22 serves as a coordination point for substrate. Position 109–110 (109–110 (GF)) interacts with pyridoxal 5'-phosphate. H134 provides a ligand contact to substrate. Residues S178, H206, and T232 each coordinate pyridoxal 5'-phosphate. K235 bears the N6-(pyridoxal phosphate)lysine mark. T348 contacts substrate.

It belongs to the class-II pyridoxal-phosphate-dependent aminotransferase family. BioF subfamily. As to quaternary structure, homodimer. Pyridoxal 5'-phosphate is required as a cofactor.

It catalyses the reaction 6-carboxyhexanoyl-[ACP] + L-alanine + H(+) = (8S)-8-amino-7-oxononanoate + holo-[ACP] + CO2. Its pathway is cofactor biosynthesis; biotin biosynthesis. Catalyzes the decarboxylative condensation of pimeloyl-[acyl-carrier protein] and L-alanine to produce 8-amino-7-oxononanoate (AON), [acyl-carrier protein], and carbon dioxide. This chain is 8-amino-7-oxononanoate synthase, found in Vibrio parahaemolyticus serotype O3:K6 (strain RIMD 2210633).